A 90-amino-acid chain; its full sequence is Sec-independent protein translocase protein TatA (90 aa).

Residues 1 to 21 (MGISPWTLLIVLLIVLLVFGT) form a helical membrane-spanning segment. Basic and acidic residues-rich tracts occupy residues 42-59 (MKEGEEGAKEGEKSEPSK) and 70-90 (SGEGHTIEGERSEQPRDRHSS). The interval 42–90 (MKEGEEGAKEGEKSEPSKLEQPPEEEKESGEGHTIEGERSEQPRDRHSS) is disordered.

It belongs to the TatA/E family. In terms of assembly, the Tat system comprises two distinct complexes: a TatABC complex, containing multiple copies of TatA, TatB and TatC subunits, and a separate TatA complex, containing only TatA subunits. Substrates initially bind to the TatABC complex, which probably triggers association of the separate TatA complex to form the active translocon.

It localises to the cell inner membrane. Its function is as follows. Part of the twin-arginine translocation (Tat) system that transports large folded proteins containing a characteristic twin-arginine motif in their signal peptide across membranes. TatA could form the protein-conducting channel of the Tat system. In Alkalilimnicola ehrlichii (strain ATCC BAA-1101 / DSM 17681 / MLHE-1), this protein is Sec-independent protein translocase protein TatA.